A 204-amino-acid polypeptide reads, in one-letter code: TPR repeat-containing protein RHE_CH03534.1 (204 aa).

The first 29 residues, 1–29 (MSAMRLFALTSAMLPLAFILSTSPFPATA), serve as a signal peptide directing secretion. 3 TPR repeats span residues 84 to 117 (INLLMQWADKAIEEKRNPAALDFLDEAIALKPDY), 118 to 151 (AESWNRRATLNFVMGNYRKSMSDIEHVLNIEPRH), and 153 to 185 (GALSGMAAILSNSGNDQLTLKAWERFLDIYPAD).

This is TPR repeat-containing protein RHE_CH03534.1 from Rhizobium etli (strain ATCC 51251 / DSM 11541 / JCM 21823 / NBRC 15573 / CFN 42).